Consider the following 451-residue polypeptide: Eukaryotic translation initiation factor 5 (451 aa).

29–36 (GRGNGIKT) provides a ligand contact to GTP. 2 disordered regions span residues 143-233 (LKNP…DDDV) and 263-299 (STEE…TKPS). Residues 147–178 (PEQKKGGKDKKAMRRAEKERLKEGEAADEEQK) are compositionally biased toward basic and acidic residues. Residues 179–188 (KLKKDAKKKG) are compositionally biased toward basic residues. Composition is skewed to basic and acidic residues over residues 208–226 (DEDH…KAAA) and 266–279 (ETEK…HKDG). The region spanning 290 to 449 (NDKPAVTKPS…QSAESDEEGD (160 aa)) is the W2 domain.

It belongs to the eIF-2-beta/eIF-5 family.

In terms of biological role, catalyzes the hydrolysis of GTP bound to the 40S ribosomal initiation complex (40S.mRNA.Met-tRNA[F].eIF-2.GTP) with the subsequent joining of a 60S ribosomal subunit resulting in the release of eIF-2 and the guanine nucleotide. The subsequent joining of a 60S ribosomal subunit results in the formation of a functional 80S initiation complex (80S.mRNA.Met-tRNA[F]). In Zea mays (Maize), this protein is Eukaryotic translation initiation factor 5 (EIF5).